Reading from the N-terminus, the 98-residue chain is MAVKERIGTVVSDKMEKTVVVAVESRFPHPIYQKTVSRTTRYKAHDEDNTCRVGDRVRITETRPMSRQKRWAIAEVLSHSPKAAAEEANKAEAQEVKQ.

Belongs to the universal ribosomal protein uS17 family. In terms of assembly, part of the 30S ribosomal subunit.

One of the primary rRNA binding proteins, it binds specifically to the 5'-end of 16S ribosomal RNA. This is Small ribosomal subunit protein uS17 from Synechococcus sp. (strain CC9605).